The following is a 708-amino-acid chain: Ubiquitin thioesterase ZRANB1 (708 aa).

A RanBP2-type 1 zinc finger spans residues 3-33 (ERGIKWACEYCTYENWPSAIKCTMCRAQRPS). The Zn(2+) site is built by Cys10, Cys13, Cys24, and Cys27. Residues 38–73 (TEDPFKSGSSDVGRDWDPSSTEGGSSPLICPDSSAR) are disordered. 2 consecutive RanBP2-type zinc fingers follow at residues 84–113 (NANKWSCHMCTYLNWPRAIRCTQCLSQRRT) and 149–178 (RTQHWTCSICTYENWAKAKKCVVCDHPRPN). Positions 90, 93, 104, 107, 155, 158, 169, and 172 each coordinate Zn(2+). The segment at 200-223 (RARWRGSCSSGNSQRRSPPTMKRD) is disordered. Positions 206–216 (SCSSGNSQRRS) are enriched in polar residues. 2 ANK repeats span residues 260 to 290 (KKTDWLFLNACVGVVEGDLAAIEAYKSSGGD) and 313 to 340 (YTLVHLAIRFQRQDMLAILLTEVSQQAA). The OTU domain maps to 432-592 (LYALWNRTAG…RGHFSALVAM (161 aa)). Catalysis depends on Cys443, which acts as the Nucleophile. His585 (proton acceptor) is an active-site residue.

It belongs to the peptidase C64 family. Interacts with TRAF6. Interacts with APC.

The protein resides in the cytoplasm. It localises to the nucleus. It carries out the reaction Thiol-dependent hydrolysis of ester, thioester, amide, peptide and isopeptide bonds formed by the C-terminal Gly of ubiquitin (a 76-residue protein attached to proteins as an intracellular targeting signal).. In terms of biological role, ubiquitin thioesterase, which specifically hydrolyzes 'Lys-29'-linked and 'Lys-33'-linked diubiquitin. Also cleaves 'Lys-63'-linked chains, but with 40-fold less efficiency compared to 'Lys-29'-linked ones. Positive regulator of the Wnt signaling pathway that deubiquitinates APC protein, a negative regulator of Wnt-mediated transcription. Acts as a regulator of autophagy by mediating deubiquitination of PIK3C3/VPS34, thereby promoting autophagosome maturation. Plays a role in the regulation of cell morphology and cytoskeletal organization. Required in the stress fiber dynamics and cell migration. This chain is Ubiquitin thioesterase ZRANB1, found in Bos taurus (Bovine).